Reading from the N-terminus, the 152-residue chain is Transcriptional regulator MraZ (152 aa).

SpoVT-AbrB domains follow at residues 5–52 (ANAI…PLPE) and 81–124 (ATEG…DHSV).

The protein belongs to the MraZ family. Forms oligomers.

It is found in the cytoplasm. The protein localises to the nucleoid. This chain is Transcriptional regulator MraZ, found in Pseudoalteromonas atlantica (strain T6c / ATCC BAA-1087).